The primary structure comprises 461 residues: Cysteine--tRNA ligase (461 aa).

Cysteine 28 is a Zn(2+) binding site. Positions 30–40 (ITVYDLCHIGH) match the 'HIGH' region motif. 3 residues coordinate Zn(2+): cysteine 209, histidine 234, and glutamate 238. The 'KMSKS' region motif lies at 266-270 (KMSKS). ATP is bound at residue lysine 269.

The protein belongs to the class-I aminoacyl-tRNA synthetase family. In terms of assembly, monomer. It depends on Zn(2+) as a cofactor.

It is found in the cytoplasm. It catalyses the reaction tRNA(Cys) + L-cysteine + ATP = L-cysteinyl-tRNA(Cys) + AMP + diphosphate. This is Cysteine--tRNA ligase from Escherichia coli (strain K12 / MC4100 / BW2952).